The primary structure comprises 1409 residues: DNA-directed RNA polymerase subunit beta' (1409 aa).

Positions 70, 72, 85, and 88 each coordinate Zn(2+). Positions 461, 463, and 465 each coordinate Mg(2+). Positions 833, 907, 914, and 917 each coordinate Zn(2+). Residues 1389–1409 are disordered; the sequence is EPVAQAAESEDVPDVSQQEAA.

This sequence belongs to the RNA polymerase beta' chain family. The RNAP catalytic core consists of 2 alpha, 1 beta, 1 beta' and 1 omega subunit. When a sigma factor is associated with the core the holoenzyme is formed, which can initiate transcription. Mg(2+) is required as a cofactor. Requires Zn(2+) as cofactor.

It catalyses the reaction RNA(n) + a ribonucleoside 5'-triphosphate = RNA(n+1) + diphosphate. DNA-dependent RNA polymerase catalyzes the transcription of DNA into RNA using the four ribonucleoside triphosphates as substrates. This Pelobacter propionicus (strain DSM 2379 / NBRC 103807 / OttBd1) protein is DNA-directed RNA polymerase subunit beta'.